The sequence spans 292 residues: MEANRGQVNHELSKLFNELWDADVNRMKAGKDYRISLQGKAGYVPARSNQAKDSASYPLFQFVDEEKLKSKKTFATFISLLDNYEMDTGVAEVVTPEEIAENNNFLDAILETKVMKMAHDYLVRKNQAKPSQNDFKVQLYSIWFQLYSRAPGSRPDSCGFEHVFVGESKRGKEMMGLHNWVQFYLQEKRKNIDYKGYVARQNKSRPDEDDQVLNLQFSWKEMVKPVGSSFIGVSPEFEFALYTIVFLASQAKMSREVIRLEEYELQIVVNRHGRYIGTAYPALLSTNNPDLY.

Residues 8 to 285 (VNHELSKLFN…IGTAYPALLS (278 aa)) form the EndoU domain. Residues H162, H178, and K224 contribute to the active site.

Belongs to the ENDOU family. Monomer. It depends on Mn(2+) as a cofactor.

Its subcellular location is the nucleus. The enzyme catalyses uridylyl-uridylyl-ribonucleotide-RNA = a 3'-end uridylyl-2',3'-cyclophospho-uridine-RNA + a 5'-end dephospho-ribonucleoside-RNA. Poly(U)-specific endoribonuclease involved in the processing of intron-encoded box C/D snoRNAs, such as U16 and U86. Releases products that have 2',3'-cyclic phosphate termini at the 3'-end. This is Poly(U)-specific endoribonuclease-B (endou-b) from Xenopus laevis (African clawed frog).